Here is a 968-residue protein sequence, read N- to C-terminus: uncharacterized protein (968 aa).

The N-terminal stretch at 1 to 27 (MHSWKKKLVVSQLALACTLAITSQANA) is a signal peptide. Residues 703-968 (GLADNGGAWV…SANVGVKYTW (266 aa)) form the Autotransporter domain.

This is an uncharacterized protein from Escherichia coli (strain K12).